We begin with the raw amino-acid sequence, 466 residues long: Adenosylhomocysteinase (466 aa).

Substrate contacts are provided by T57, D132, and E192. Position 193–195 (193–195 (TTT)) interacts with NAD(+). Substrate contacts are provided by K222 and D226. NAD(+) contacts are provided by residues N227, 256 to 261 (GYGDVG), E279, N314, 335 to 337 (IGH), and N380.

It belongs to the adenosylhomocysteinase family. NAD(+) serves as cofactor.

The protein resides in the cytoplasm. The enzyme catalyses S-adenosyl-L-homocysteine + H2O = L-homocysteine + adenosine. It functions in the pathway amino-acid biosynthesis; L-homocysteine biosynthesis; L-homocysteine from S-adenosyl-L-homocysteine: step 1/1. May play a key role in the regulation of the intracellular concentration of adenosylhomocysteine. This chain is Adenosylhomocysteinase, found in Chromobacterium violaceum (strain ATCC 12472 / DSM 30191 / JCM 1249 / CCUG 213 / NBRC 12614 / NCIMB 9131 / NCTC 9757 / MK).